Consider the following 139-residue polypeptide: Large ribosomal subunit protein uL16 (139 aa).

It belongs to the universal ribosomal protein uL16 family. Part of the 50S ribosomal subunit.

Functionally, binds 23S rRNA and is also seen to make contacts with the A and possibly P site tRNAs. The sequence is that of Large ribosomal subunit protein uL16 from Protochlamydia amoebophila (strain UWE25).